We begin with the raw amino-acid sequence, 606 residues long: Elongation factor 4 (606 aa).

One can recognise a tr-type G domain in the interval 7–189 (SRIRNFCIIA…AVVDRVPPPK (183 aa)). GTP-binding positions include 19 to 24 (DHGKST) and 136 to 139 (NKID).

The protein belongs to the TRAFAC class translation factor GTPase superfamily. Classic translation factor GTPase family. LepA subfamily.

The protein resides in the cell inner membrane. It catalyses the reaction GTP + H2O = GDP + phosphate + H(+). Its function is as follows. Required for accurate and efficient protein synthesis under certain stress conditions. May act as a fidelity factor of the translation reaction, by catalyzing a one-codon backward translocation of tRNAs on improperly translocated ribosomes. Back-translocation proceeds from a post-translocation (POST) complex to a pre-translocation (PRE) complex, thus giving elongation factor G a second chance to translocate the tRNAs correctly. Binds to ribosomes in a GTP-dependent manner. The protein is Elongation factor 4 of Parasynechococcus marenigrum (strain WH8102).